The primary structure comprises 379 residues: Isocitrate dehydrogenase [NAD] subunit 2, mitochondrial (379 aa).

The transit peptide at 1–27 (MSMLSTLRTAGSLRTFSRSACYSFQRF) directs the protein to the mitochondrion. Substrate contacts are provided by Arg-129, Arg-139, Arg-160, and Asp-247. Mg(2+) is bound by residues Asp-247, Asp-273, and Asp-277.

It belongs to the isocitrate and isopropylmalate dehydrogenases family. Octamer of two non-identical subunits IDH1 and IDH2. It depends on Mg(2+) as a cofactor. Mn(2+) is required as a cofactor.

Its subcellular location is the mitochondrion. The enzyme catalyses D-threo-isocitrate + NAD(+) = 2-oxoglutarate + CO2 + NADH. Performs an essential role in the oxidative function of the citric acid cycle and is involved in glutamate biosynthesis. Also binds RNA; specifically to the 5'-untranslated leaders of mitochondrial mRNAs. This Schizosaccharomyces pombe (strain 972 / ATCC 24843) (Fission yeast) protein is Isocitrate dehydrogenase [NAD] subunit 2, mitochondrial (idh2).